The chain runs to 323 residues: Dihydrodiol dehydrogenase 3 (323 aa).

NADP(+) contacts are provided by residues 20–24 (GFGTF) and Asp-50. Tyr-55 (proton donor) is an active-site residue. His-117 contacts substrate. Residues 166 to 167 (SN), Gln-190, 216 to 221 (YGALGS), and 270 to 280 (KSYNKKRIKEN) each bind NADP(+).

Belongs to the aldo/keto reductase family.

It is found in the cytoplasm. The polypeptide is Dihydrodiol dehydrogenase 3 (Bos taurus (Bovine)).